The primary structure comprises 418 residues: Exodeoxyribonuclease 7 large subunit (418 aa).

Belongs to the XseA family. In terms of assembly, heterooligomer composed of large and small subunits.

It localises to the cytoplasm. The enzyme catalyses Exonucleolytic cleavage in either 5'- to 3'- or 3'- to 5'-direction to yield nucleoside 5'-phosphates.. In terms of biological role, bidirectionally degrades single-stranded DNA into large acid-insoluble oligonucleotides, which are then degraded further into small acid-soluble oligonucleotides. The chain is Exodeoxyribonuclease 7 large subunit from Acaryochloris marina (strain MBIC 11017).